A 90-amino-acid polypeptide reads, in one-letter code: Cyclin-dependent kinases regulatory subunit 1 (90 aa).

It belongs to the CKS family.

Its function is as follows. Binds to the catalytic subunit of the cyclin dependent kinases and is essential for their biological function. The chain is Cyclin-dependent kinases regulatory subunit 1 (CKS1) from Oryza sativa subsp. indica (Rice).